Consider the following 86-residue polypeptide: MDAFDVIKTPIVSEKTMKLIEEENRLVFYVERKATKADVRAAIKELFDAEVADINTSITPKGKKKAYITLKDEYNAGEVAASLGIY.

This sequence belongs to the universal ribosomal protein uL23 family. In terms of assembly, part of the 50S ribosomal subunit. Contacts protein L29.

Its function is as follows. Binds to 23S rRNA. One of the proteins that surrounds the polypeptide exit tunnel on the outside of the ribosome. In Methanococcus maripaludis (strain DSM 14266 / JCM 13030 / NBRC 101832 / S2 / LL), this protein is Large ribosomal subunit protein uL23.